The following is a 370-amino-acid chain: MATLSLHSHSFLLVLLPFILILRQNLAVAGGCQVPPVIFNFGDSNSDTGGLVAGLGYSIGLPNGRSFFQRSTGRLSDGRLVIDFLCQSLNTSLLNPYLDSLVGSKFQNGANFAIVGSSTLPRYVPFALNIQLMQFLHFKSRALELASISDPLKEMMIGESGFRNALYMIDIGQNDIADSFSKGLSYSRVVKLIPNVISEIKSAIKILYDEGGRKFWVHNTGPLGCLPQKLSMVHSKGFDKHGCLATYNAAAKLFNEGLDHMCRDLRTELKEANIVYVDIYAIKYDLIANSNNYGFEKPLMACCGYGGPPYNYNVNITCGNGGSKSCDEGSRFISWDGIHYTETANAIVAMKVLSMQHSTPPTPFHFFCGG.

The first 27 residues, 1–27 (MATLSLHSHSFLLVLLPFILILRQNLA), serve as a signal peptide directing secretion. The active-site Nucleophile is the Ser-44. N-linked (GlcNAc...) asparagine glycosylation is found at Asn-90 and Asn-315. Residues Asp-336 and His-339 contribute to the active site.

It belongs to the 'GDSL' lipolytic enzyme family.

The protein localises to the secreted. The sequence is that of GDSL esterase/lipase At1g09390 from Arabidopsis thaliana (Mouse-ear cress).